Consider the following 275-residue polypeptide: MNPGLYADLTKPTADFIKKDFAETFKLDTTFKGKYGSIVAVTDIKDSGVVASIQPKADFTKYLGKVSNGNFTVDTNGVKKGEFTIENIIPGLKAVANGDSKQNFSTEFQYKKDKIAFTLFGHNNKSFNTSLAFLINPTFSVGVQAEGNAKNTLKNVNATITIRPRPDVFVSIVDRFMDKQILLSTLYTATSKLSFAGDVTVDLKASEKAPSFNVGTQYKIDSASLLKAKVNNNRKVNISYIYNTSNNTKFVLGWNVNTKNFKQGNTFGATVNLTL.

A Blocked amino end (Met) modification is found at Met1.

This sequence belongs to the eukaryotic mitochondrial porin family. Highly divergent.

It localises to the mitochondrion outer membrane. Its function is as follows. Forms a channel of about 1,7 nM through the cell membrane that allows diffusion of small hydrophilic molecules. The channel adopts an open conformation at low or zero membrane potential and a closed conformation at potentials above 20 mv. The open state has a weak anion selectivity whereas the closed state is cation-selective. In Dictyostelium discoideum (Social amoeba), this protein is Mitochondrial outer membrane protein porin (porA).